The following is a 186-amino-acid chain: Elongation factor P (186 aa).

This sequence belongs to the elongation factor P family.

It is found in the cytoplasm. It functions in the pathway protein biosynthesis; polypeptide chain elongation. Functionally, involved in peptide bond synthesis. Stimulates efficient translation and peptide-bond synthesis on native or reconstituted 70S ribosomes in vitro. Probably functions indirectly by altering the affinity of the ribosome for aminoacyl-tRNA, thus increasing their reactivity as acceptors for peptidyl transferase. The sequence is that of Elongation factor P from Brucella canis (strain ATCC 23365 / NCTC 10854 / RM-666).